The primary structure comprises 161 residues: Protein PLANT CADMIUM RESISTANCE 12 (161 aa).

Residues 71–89 (AGLIHLALGFIGCSWLYAF) form a helical membrane-spanning segment.

Belongs to the cornifelin family.

The protein resides in the membrane. May be involved in heavy metals transport. The sequence is that of Protein PLANT CADMIUM RESISTANCE 12 (PCR12) from Arabidopsis thaliana (Mouse-ear cress).